Here is a 345-residue protein sequence, read N- to C-terminus: Dihydroorotase (345 aa).

Zn(2+) is bound by residues histidine 13 and histidine 15. Substrate contacts are provided by residues 15-17 (HLR) and asparagine 41. 4 residues coordinate Zn(2+): lysine 99, histidine 136, histidine 174, and aspartate 247. Lysine 99 carries the N6-carboxylysine modification. Histidine 136 is a substrate binding site. Residue aspartate 247 is part of the active site. The substrate site is built by histidine 251 and alanine 263.

This sequence belongs to the metallo-dependent hydrolases superfamily. DHOase family. Class II DHOase subfamily. As to quaternary structure, homodimer. Zn(2+) is required as a cofactor.

It carries out the reaction (S)-dihydroorotate + H2O = N-carbamoyl-L-aspartate + H(+). The protein operates within pyrimidine metabolism; UMP biosynthesis via de novo pathway; (S)-dihydroorotate from bicarbonate: step 3/3. In terms of biological role, catalyzes the reversible cyclization of carbamoyl aspartate to dihydroorotate. In Halorhodospira halophila (strain DSM 244 / SL1) (Ectothiorhodospira halophila (strain DSM 244 / SL1)), this protein is Dihydroorotase.